Consider the following 523-residue polypeptide: Probable lipid II flippase MurJ (523 aa).

The next 12 helical transmembrane spans lie at 98 to 118, 146 to 166, 170 to 190, 201 to 221, 246 to 266, 284 to 304, 328 to 348, 360 to 380, 395 to 415, 422 to 442, 461 to 481, and 489 to 509; these read AFYS…IVYV, IMFG…ILNA, FGLP…FTFM, GLAW…AVAL, MLPG…NLYF, LLEL…LPTL, LFLA…IIEV, VQMT…VSCS, VPMV…PVLM, GLMI…MGLL, FVLA…LMAQ, and LALF…AYVL.

The protein belongs to the MurJ/MviN family.

The protein localises to the cell inner membrane. It participates in cell wall biogenesis; peptidoglycan biosynthesis. Its function is as follows. Involved in peptidoglycan biosynthesis. Transports lipid-linked peptidoglycan precursors from the inner to the outer leaflet of the cytoplasmic membrane. The chain is Probable lipid II flippase MurJ from Bdellovibrio bacteriovorus (strain ATCC 15356 / DSM 50701 / NCIMB 9529 / HD100).